A 433-amino-acid polypeptide reads, in one-letter code: Probable imidazolonepropionase (433 aa).

Residues Tyr160 and His193 each contribute to the 4-imidazolone-5-propanoate site. Tyr160 contributes to the N-formimidoyl-L-glutamate binding site. Residue His261 coordinates Fe(3+). Zn(2+) is bound at residue His261. Glu264 contacts 4-imidazolone-5-propanoate. Residue Asp335 coordinates Fe(3+). Asp335 contributes to the Zn(2+) binding site. Asn337 contributes to the N-formimidoyl-L-glutamate binding site.

The protein belongs to the metallo-dependent hydrolases superfamily. HutI family. Zn(2+) is required as a cofactor. Requires Fe(3+) as cofactor.

The enzyme catalyses 4-imidazolone-5-propanoate + H2O = N-formimidoyl-L-glutamate. It participates in amino-acid degradation; L-histidine degradation into L-glutamate; N-formimidoyl-L-glutamate from L-histidine: step 3/3. The protein is Probable imidazolonepropionase (amdhd1) of Danio rerio (Zebrafish).